The chain runs to 227 residues: Enolase-phosphatase E1 (227 aa).

It belongs to the HAD-like hydrolase superfamily. MasA/MtnC family. As to quaternary structure, monomer. It depends on Mg(2+) as a cofactor.

It carries out the reaction 5-methylsulfanyl-2,3-dioxopentyl phosphate + H2O = 1,2-dihydroxy-5-(methylsulfanyl)pent-1-en-3-one + phosphate. It functions in the pathway amino-acid biosynthesis; L-methionine biosynthesis via salvage pathway; L-methionine from S-methyl-5-thio-alpha-D-ribose 1-phosphate: step 3/6. Its pathway is amino-acid biosynthesis; L-methionine biosynthesis via salvage pathway; L-methionine from S-methyl-5-thio-alpha-D-ribose 1-phosphate: step 4/6. In terms of biological role, bifunctional enzyme that catalyzes the enolization of 2,3-diketo-5-methylthiopentyl-1-phosphate (DK-MTP-1-P) into the intermediate 2-hydroxy-3-keto-5-methylthiopentenyl-1-phosphate (HK-MTPenyl-1-P), which is then dephosphorylated to form the acireductone 1,2-dihydroxy-3-keto-5-methylthiopentene (DHK-MTPene). This is Enolase-phosphatase E1 from Pseudomonas fluorescens (strain Pf0-1).